The following is a 29-amino-acid chain: Potassium channel toxin alpha-KTx 20.1 (29 aa).

3 cysteine pairs are disulfide-bonded: cysteine 2-cysteine 20, cysteine 7-cysteine 24, and cysteine 11-cysteine 26.

This sequence belongs to the short scorpion toxin superfamily. Potassium channel inhibitor family. Alpha-KTx 20 subfamily. As to expression, expressed by the venom gland.

The protein localises to the secreted. Reduces potassium currents through Kv1.2/KCNA2 and Kv1.3/KCNA3 voltage-gated potassium channels. In Tityus trivittatus (Argentinean scorpion), this protein is Potassium channel toxin alpha-KTx 20.1.